The sequence spans 95 residues: Aspartyl/glutamyl-tRNA(Asn/Gln) amidotransferase subunit C (95 aa).

The protein belongs to the GatC family. Heterotrimer of A, B and C subunits.

It catalyses the reaction L-glutamyl-tRNA(Gln) + L-glutamine + ATP + H2O = L-glutaminyl-tRNA(Gln) + L-glutamate + ADP + phosphate + H(+). The catalysed reaction is L-aspartyl-tRNA(Asn) + L-glutamine + ATP + H2O = L-asparaginyl-tRNA(Asn) + L-glutamate + ADP + phosphate + 2 H(+). Its function is as follows. Allows the formation of correctly charged Asn-tRNA(Asn) or Gln-tRNA(Gln) through the transamidation of misacylated Asp-tRNA(Asn) or Glu-tRNA(Gln) in organisms which lack either or both of asparaginyl-tRNA or glutaminyl-tRNA synthetases. The reaction takes place in the presence of glutamine and ATP through an activated phospho-Asp-tRNA(Asn) or phospho-Glu-tRNA(Gln). This is Aspartyl/glutamyl-tRNA(Asn/Gln) amidotransferase subunit C from Rhodopseudomonas palustris (strain BisA53).